The chain runs to 446 residues: Maltoporin (446 aa).

The signal sequence occupies residues 1–25 (MMITLRKLPLAVAVAAGVMSAQAMA).

This sequence belongs to the porin LamB (TC 1.B.3) family. Homotrimer formed of three 18-stranded antiparallel beta-barrels, containing three independent channels.

The protein localises to the cell outer membrane. The enzyme catalyses beta-maltose(in) = beta-maltose(out). Its function is as follows. Involved in the transport of maltose and maltodextrins. This chain is Maltoporin, found in Escherichia coli O8 (strain IAI1).